The following is a 150-amino-acid chain: Small ribosomal subunit protein uS13 (150 aa).

This sequence belongs to the universal ribosomal protein uS13 family. In terms of assembly, part of the 30S ribosomal subunit. Forms a loose heterodimer with protein S19. Forms two bridges to the 50S subunit in the 70S ribosome.

In terms of biological role, located at the top of the head of the 30S subunit, it contacts several helices of the 16S rRNA. In the 70S ribosome it contacts the 23S rRNA (bridge B1a) and protein L5 of the 50S subunit (bridge B1b), connecting the 2 subunits; these bridges are implicated in subunit movement. This Methanocorpusculum labreanum (strain ATCC 43576 / DSM 4855 / Z) protein is Small ribosomal subunit protein uS13.